The chain runs to 129 residues: Sm-like protein LSM4 (129 aa).

The 74-residue stretch at 2-75 (LPLSLLKTAQ…IKYLRVPDEV (74 aa)) folds into the Sm domain. Positions 79–90 (VQEEKTRTDRKP) are enriched in basic and acidic residues. The interval 79–129 (VQEEKTRTDRKPPGVGRGRGRGVDDGGARGRGRGTSMGKMGGNRGAGRGRG) is disordered. Over residues 111–129 (RGTSMGKMGGNRGAGRGRG) the composition is skewed to gly residues.

It belongs to the snRNP Sm proteins family. In terms of assembly, component of the heptameric LSM1-LSM7 complex that forms a seven-membered ring structure with a donut shape. The LSM subunits are arranged in the order LSM1, LSM2, LSM3, LSM6, LSM5, LSM7 and LSM4. LSM4 subunit interacts only with its two neighboring subunits, LSM1A or LSM1B and LSM7. Component of the heptameric LSM2-LSM8 complex that forms a seven-membered ring structure with a donut shape. The LSM subunits are arranged in the order LSM8, LSM2, LSM3, LSM6, LSM5, LSM7 and LSM4. LSM4 subunit interacts only with its two neighboring subunits, LSM8 and LSM7. Post-translationally, methylated by PMRT15/SKB1 in response to salt stress or abscisic acid (ABA) treatment. In terms of tissue distribution, expressed in roots, leaves, stems, flowers and siliques.

It is found in the cytoplasm. It localises to the nucleus. Functionally, component of LSM protein complexes, which are involved in RNA processing. Component of the cytoplasmic LSM1-LSM7 complex which is involved in mRNA degradation by promoting decapping and leading to accurate 5'-3' mRNA decay. The cytoplasmic LSM1-LSM7 complex regulates developmental gene expression by the decapping of specific development-related transcripts. Component of the nuclear LSM2-LSM8 complex which is involved splicing nuclear mRNAs. LSM2-LSM8 binds directly to the U6 small nuclear RNAs (snRNAs) and is essential for accurate splicing of selected development-related mRNAs through the stabilization of the spliceosomal U6 snRNA. Plays a critical role in the regulation of development-related gene expression. This Arabidopsis thaliana (Mouse-ear cress) protein is Sm-like protein LSM4.